The following is a 293-amino-acid chain: DOMON domain-containing protein FRRS1L (293 aa).

An N-terminal signal peptide occupies residues 1–28 (MAGQPLRRPAWVPLLLRLLLAGIAACDA). Residues 29-60 (SPADDSAGPGGRGPRGRARGDAGADEAVPRHD) are disordered. Basic and acidic residues predominate over residues 46 to 60 (ARGDAGADEAVPRHD). The 116-residue stretch at 119-234 (CDYFLSYRMI…WYYLFAWGPA (116 aa)) folds into the DOMON domain. The chain crosses the membrane as a helical span at residues 271-291 (TFSSPFCLLLIVALTFYLLMG).

In terms of assembly, component of the outer core of AMPAR complex. AMPAR complex consists of an inner core made of 4 pore-forming GluA/GRIA proteins (GRIA1, GRIA2, GRIA3 and GRIA4) and 4 major auxiliary subunits arranged in a twofold symmetry. One of the two pairs of distinct binding sites is occupied either by CNIH2, CNIH3 or CACNG2, CACNG3. The other harbors CACNG2, CACNG3, CACNG4, CACNG8 or GSG1L. This inner core of AMPAR complex is complemented by outer core constituents binding directly to the GluA/GRIA proteins at sites distinct from the interaction sites of the inner core constituents. Outer core constituents include at least PRRT1, PRRT2, CKAMP44/SHISA9, FRRS1L and NRN1. The proteins of the inner and outer core serve as a platform for other, more peripherally associated AMPAR constituents. Alone or in combination, these auxiliary subunits control the gating and pharmacology of the AMPAR complex and profoundly impact their biogenesis and protein processing. In terms of tissue distribution, expressed in the brain (at protein level). In embryos expression is evident in the ventral forebrain, but a lower level is seen in the remainder of the embryos. In the adult brain, expressed in the cortex, cerebellum, hippocampus and basal ganglia.

The protein resides in the cell membrane. It is found in the synapse. In terms of biological role, important modulator of glutamate signaling pathway. The polypeptide is DOMON domain-containing protein FRRS1L (Frrs1l) (Mus musculus (Mouse)).